Consider the following 44-residue polypeptide: Antimicrobial peptide 2 (44 aa).

Post-translationally, disulfide bonds. Expressed in flowers but not in leaves, seeds or roots (at protein level).

Functionally, antimicrobial peptide. Active against fungal species B.cinerea (IC(50)=5.2 uM), A.niger (IC(50)=2.6 uM) and B.sorokinina (IC(50)=5.2 uM) but not against F.oxysporum, F.graminearum and P.debaryanum at concentrations below 10 uM. Inhibits growth of P.infestans at concentration between 1.3 uM and 5.2 uM. Active against bacterial species P.syringae, B.subtilis, X.campestris and C.michiganense. The chain is Antimicrobial peptide 2 from Taraxacum officinale (Common dandelion).